Reading from the N-terminus, the 578-residue chain is Matrix metalloproteinase-17 (578 aa).

Disordered regions lie at residues 1–22 (MGRR…PGPG) and 107–133 (PRCS…TKWS). The N-terminal stretch at 1-39 (MGRRPRGPGSPRGPGPPRPGPGLPPLLLVLALAAHGGCA) is a signal peptide. Residues 11-22 (PRGPGPPRPGPG) are compositionally biased toward pro residues. Positions 40–124 (APAPRAEDLS…PPGAQSRRKR (85 aa)) are excised as a propeptide. Positions 107 to 114 (PRCSLPDL) match the Cysteine switch motif. C109 contributes to the Zn(2+) binding site. N136 carries an N-linked (GlcNAc...) asparagine glycan. Position 247 (H247) interacts with Zn(2+). E248 is a catalytic residue. Positions 251 and 257 each coordinate Zn(2+). Residues 301–334 (PTAQLDTPEPEEPPLLPEPPNNRSSTPPQKDVPH) form a disordered region. N322 is a glycosylation site (N-linked (GlcNAc...) asparagine). 4 Hemopexin repeats span residues 333-382 (PHRC…WRGL), 386-432 (LDSV…SLPP), 436-479 (DAVF…WRGV), and 480-527 (PSML…WLVC). C336 and C527 form a disulfide bridge. S558 carries GPI-anchor amidated serine lipidation. Residues 559–578 (DAHRLALPSLLLLTPLLWGL) constitute a propeptide, removed in mature form.

The protein belongs to the peptidase M10A family. The cofactor is Zn(2+). Requires Ca(2+) as cofactor. Post-translationally, the precursor is cleaved by a furin endopeptidase. In terms of tissue distribution, expressed by monocytes and macrophages.

The protein localises to the cell membrane. The protein resides in the secreted. It is found in the extracellular space. Its subcellular location is the extracellular matrix. Its function is as follows. Endopeptidase that degrades various components of the extracellular matrix, such as fibrin. May be involved in the activation of membrane-bound precursors of growth factors or inflammatory mediators, such as tumor necrosis factor-alpha. May also be involved in tumoral process. Not obvious if able to proteolytically activate progelatinase A. Does not hydrolyze collagen types I, II, III, IV and V, gelatin, fibronectin, laminin, decorin nor alpha1-antitrypsin. The protein is Matrix metalloproteinase-17 (Mmp17) of Mus musculus (Mouse).